The chain runs to 128 residues: Probable 4-amino-4-deoxy-L-arabinose-phosphoundecaprenol flippase subunit ArnF (128 aa).

The Cytoplasmic segment spans residues 1–2 (MG). A helical transmembrane segment spans residues 3–23 (LMWGLFSVIIASVAQLSLGFA). Topologically, residues 24 to 35 (ASHLPPMTHLWD) are periplasmic. A helical transmembrane segment spans residues 36–56 (FIATLLAFGLDARILLLGLLG). The Cytoplasmic portion of the chain corresponds to 57–77 (YLLSVFCWYKTLHKLALSKAY). The helical transmembrane segment at 78-98 (ALLSMSYVLVWIASMVLPGWG) threads the bilayer. Residues 99 to 100 (GT) lie on the Periplasmic side of the membrane. The chain crosses the membrane as a helical span at residues 101–121 (FSLKALLGVACIMSGLMLIFL). The Cytoplasmic portion of the chain corresponds to 122 to 128 (PTTKQRY).

This sequence belongs to the ArnF family. Heterodimer of ArnE and ArnF.

The protein localises to the cell inner membrane. It participates in bacterial outer membrane biogenesis; lipopolysaccharide biosynthesis. Translocates 4-amino-4-deoxy-L-arabinose-phosphoundecaprenol (alpha-L-Ara4N-phosphoundecaprenol) from the cytoplasmic to the periplasmic side of the inner membrane. In Shigella dysenteriae serotype 1 (strain Sd197), this protein is Probable 4-amino-4-deoxy-L-arabinose-phosphoundecaprenol flippase subunit ArnF.